Here is a 435-residue protein sequence, read N- to C-terminus: Methionine aminopeptidase 2-2 (435 aa).

The segment at 1 to 92 (MAAQTTEKLQ…VPVSNLFPNN (92 aa)) is disordered. The segment covering 24-33 (DAPAAGQAEA) has biased composition (low complexity). A compositionally biased stretch (acidic residues) spans 34-45 (GEAEEDSDDEKD). Residues 59 to 73 (AKKKKRKSKKKKKGG) are compositionally biased toward basic residues. H197 serves as a coordination point for substrate. A divalent metal cation contacts are provided by D217, D228, and H297. H305 provides a ligand contact to substrate. E330 and E425 together coordinate a divalent metal cation.

This sequence belongs to the peptidase M24A family. Methionine aminopeptidase eukaryotic type 2 subfamily. Co(2+) is required as a cofactor. The cofactor is Zn(2+). It depends on Mn(2+) as a cofactor. Fe(2+) serves as cofactor.

Its subcellular location is the cytoplasm. The catalysed reaction is Release of N-terminal amino acids, preferentially methionine, from peptides and arylamides.. In terms of biological role, cotranslationally removes the N-terminal methionine from nascent proteins. The N-terminal methionine is often cleaved when the second residue in the primary sequence is small and uncharged (Met-Ala-, Cys, Gly, Pro, Ser, Thr, or Val). This is Methionine aminopeptidase 2-2 from Aspergillus clavatus (strain ATCC 1007 / CBS 513.65 / DSM 816 / NCTC 3887 / NRRL 1 / QM 1276 / 107).